Here is a 523-residue protein sequence, read N- to C-terminus: 2-isopropylmalate synthase (523 aa).

In terms of domain architecture, Pyruvate carboxyltransferase spans 5–267; the sequence is VIIFDTTLRD…HTAINHQEIW (263 aa). The Mn(2+) site is built by aspartate 14, histidine 202, histidine 204, and asparagine 238. The segment at 392-523 is regulatory domain; sequence RLDYFSVQSG…QHNENNKETV (132 aa).

This sequence belongs to the alpha-IPM synthase/homocitrate synthase family. LeuA type 1 subfamily. In terms of assembly, homodimer. The cofactor is Mn(2+).

The protein resides in the cytoplasm. The catalysed reaction is 3-methyl-2-oxobutanoate + acetyl-CoA + H2O = (2S)-2-isopropylmalate + CoA + H(+). The protein operates within amino-acid biosynthesis; L-leucine biosynthesis; L-leucine from 3-methyl-2-oxobutanoate: step 1/4. Catalyzes the condensation of the acetyl group of acetyl-CoA with 3-methyl-2-oxobutanoate (2-ketoisovalerate) to form 3-carboxy-3-hydroxy-4-methylpentanoate (2-isopropylmalate). This Escherichia coli O81 (strain ED1a) protein is 2-isopropylmalate synthase.